A 299-amino-acid polypeptide reads, in one-letter code: NADH-cytochrome b5 reductase 2 (299 aa).

The chain crosses the membrane as a helical span at residues 13–35; the sequence is SFKVLAPFAAAVGSVGIAYQYST. The FAD-binding FR-type domain maps to 50-154; the sequence is DEWIDLKLAK…KGPVVKWKWE (105 aa). Residue 157–192 participates in FAD binding; the sequence is QYKSIALIGGGTGITPLYQLMHEITKNPEDKTKVNL.

This sequence belongs to the flavoprotein pyridine nucleotide cytochrome reductase family. The cofactor is FAD.

Its subcellular location is the mitochondrion outer membrane. It catalyses the reaction 2 Fe(III)-[cytochrome b5] + NADH = 2 Fe(II)-[cytochrome b5] + NAD(+) + H(+). In terms of biological role, may mediate the reduction of outer membrane cytochrome b5. The sequence is that of NADH-cytochrome b5 reductase 2 (MCR1) from Debaryomyces hansenii (strain ATCC 36239 / CBS 767 / BCRC 21394 / JCM 1990 / NBRC 0083 / IGC 2968) (Yeast).